A 309-amino-acid polypeptide reads, in one-letter code: Serine/threonine-protein phosphatase CPPED1 (309 aa).

Residues 47-250 (WRIGDCDSGG…FSGHYHRNAG (204 aa)) form a catalytic region. The a divalent metal cation site is built by D51, D88, N125, and H244.

Belongs to the metallophosphoesterase superfamily. CPPED1 family. The cofactor is a divalent metal cation.

The protein resides in the cytoplasm. The enzyme catalyses O-phospho-L-seryl-[protein] + H2O = L-seryl-[protein] + phosphate. The catalysed reaction is O-phospho-L-threonyl-[protein] + H2O = L-threonyl-[protein] + phosphate. Functionally, protein phosphatase involved in the dephosphorylation of AKT kinase family. This chain is Serine/threonine-protein phosphatase CPPED1 (cpped1), found in Danio rerio (Zebrafish).